We begin with the raw amino-acid sequence, 509 residues long: Bifunctional pantoate ligase/cytidylate kinase (509 aa).

The segment at 1-275 (MKKLIIRKTE…CGETRLIDHV (275 aa)) is pantoate--beta-alanine ligase. Residue 29–36 (MGNLHDGH) coordinates ATP. His36 functions as the Proton donor in the catalytic mechanism. Gln61 contributes to the (R)-pantoate binding site. Gln61 provides a ligand contact to beta-alanine. Position 149-152 (149-152 (GEKD)) interacts with ATP. Residue Gln155 participates in (R)-pantoate binding. Residue 186–189 (LSSR) participates in ATP binding. The tract at residues 276-509 (FLMKRRPIIA…DKIPKESEIK (234 aa)) is cytidylate kinase.

It in the N-terminal section; belongs to the pantothenate synthetase family. The protein in the C-terminal section; belongs to the cytidylate kinase family. Type 1 subfamily.

The protein resides in the cytoplasm. It catalyses the reaction (R)-pantoate + beta-alanine + ATP = (R)-pantothenate + AMP + diphosphate + H(+). The catalysed reaction is CMP + ATP = CDP + ADP. The enzyme catalyses dCMP + ATP = dCDP + ADP. The protein operates within cofactor biosynthesis; (R)-pantothenate biosynthesis; (R)-pantothenate from (R)-pantoate and beta-alanine: step 1/1. Its function is as follows. Catalyzes the condensation of pantoate with beta-alanine in an ATP-dependent reaction via a pantoyl-adenylate intermediate. Catalyzes the transfer of a phosphate group from ATP to either CMP or dCMP to form CDP or dCDP and ADP, respectively. The sequence is that of Bifunctional pantoate ligase/cytidylate kinase from Prochlorococcus marinus (strain AS9601).